We begin with the raw amino-acid sequence, 734 residues long: Photosystem I P700 chlorophyll a apoprotein A2 (734 aa).

8 consecutive transmembrane segments (helical) span residues 46 to 69 (IFASHFGHLAIIFLWTSGNLFHVA), 135 to 158 (LYTGALFLLVLSAILLFGGWLHLQ), 175 to 199 (LNHHLSGLFGVSSLAWTGHLVHVAI), 273 to 291 (MAHHHLAIAVVFIVAGHMY), 330 to 353 (LHMQLGLALAALGVITSLVAQHMY), 369 to 395 (ASLYTHHQYIAGFLMVGAFAHGAIFFV), 417 to 439 (AIISHLSWVTLFLGFHTLGLYVH), and 517 to 535 (FLVHHAIALGLHTTALILV). Positions 559 and 568 each coordinate [4Fe-4S] cluster. 2 consecutive transmembrane segments (helical) span residues 575-596 (AFYLAVFWMLNTIGWVTFYWHW) and 643-665 (LSVWSWMFLFGHLVWATGFMFLI). Chlorophyll a-binding residues include His654, Met662, and Tyr670. Trp671 contacts phylloquinone. The helical transmembrane segment at 707–727 (LVGLAHFSVGYVLTYAAFVLA) threads the bilayer.

Belongs to the PsaA/PsaB family. As to quaternary structure, the PsaA/B heterodimer binds the P700 chlorophyll special pair and subsequent electron acceptors. PSI consists of a core antenna complex that captures photons, and an electron transfer chain that converts photonic excitation into a charge separation. The eukaryotic PSI reaction center is composed of at least 11 subunits. It depends on P700 is a chlorophyll a/chlorophyll a' dimer, A0 is one or more chlorophyll a, A1 is one or both phylloquinones and FX is a shared 4Fe-4S iron-sulfur center. as a cofactor.

The protein localises to the plastid. It is found in the chloroplast thylakoid membrane. The enzyme catalyses reduced [plastocyanin] + hnu + oxidized [2Fe-2S]-[ferredoxin] = oxidized [plastocyanin] + reduced [2Fe-2S]-[ferredoxin]. PsaA and PsaB bind P700, the primary electron donor of photosystem I (PSI), as well as the electron acceptors A0, A1 and FX. PSI is a plastocyanin/cytochrome c6-ferredoxin oxidoreductase, converting photonic excitation into a charge separation, which transfers an electron from the donor P700 chlorophyll pair to the spectroscopically characterized acceptors A0, A1, FX, FA and FB in turn. Oxidized P700 is reduced on the lumenal side of the thylakoid membrane by plastocyanin or cytochrome c6. The chain is Photosystem I P700 chlorophyll a apoprotein A2 from Porphyra purpurea (Red seaweed).